Consider the following 574-residue polypeptide: Peptidyl-prolyl cis-trans isomerase FKBP9 (574 aa).

Positions 1-26 (MAIRARSWRPPPPPLLLLLLWVTGQA) are cleaved as a signal peptide. PPIase FKBP-type domains follow at residues 58-146 (GDFV…MDIW), 170-258 (SDFV…LDLH), 282-369 (GDFL…IDFH), and 393-481 (GDYL…LELV). N-linked (GlcNAc...) asparagine glycosylation is found at N178, N290, N306, and N401. EF-hand domains lie at 492 to 527 (WNGEVSANLFEEIDKDGDGEVLLEEFSEYIHAQVAS) and 537 to 572 (DAEMIVKNMFTNQDRNGDGKVTAEEFKLKDQETKHD). Ca(2+)-binding residues include D505, D507, D509, E511, E516, D550, N552, D554, K556, and E561. The Prevents secretion from ER motif lies at 571 to 574 (HDEL).

In terms of processing, phosphorylated.

It localises to the endoplasmic reticulum. The enzyme catalyses [protein]-peptidylproline (omega=180) = [protein]-peptidylproline (omega=0). Inhibited by FK506. Its function is as follows. PPIases accelerate the folding of proteins during protein synthesis. The polypeptide is Peptidyl-prolyl cis-trans isomerase FKBP9 (FKBP9) (Bos taurus (Bovine)).